An 89-amino-acid polypeptide reads, in one-letter code: Protein RALF-like 5 (89 aa).

Residues 1–25 (MLKAQVFMFVTVLVFVCVFINSNDA) form the signal peptide. Cystine bridges form between Cys-39-Cys-48 and Cys-61-Cys-67.

The protein belongs to the plant rapid alkalinization factor (RALF) family.

The protein resides in the secreted. In terms of biological role, cell signaling peptide that may regulate plant stress, growth, and development. Mediates a rapid alkalinization of extracellular space by mediating a transient increase in the cytoplasmic Ca(2+) concentration leading to a calcium-dependent signaling events through a cell surface receptor and a concomitant activation of some intracellular mitogen-activated protein kinases. The sequence is that of Protein RALF-like 5 (RALFL5) from Arabidopsis thaliana (Mouse-ear cress).